Here is an 89-residue protein sequence, read N- to C-terminus: Cytochrome c oxidase subunit 7A, mitochondrial (89 aa).

A mitochondrion-targeting transit peptide spans 1–31 (MMNLSRAVVRSFATTAGRRSAAVPKDQIEKG). Over 32 to 58 (YFEIRKVQEHFQKKDGKPVFLKGSVVD) the chain is Mitochondrial matrix. Residues 59-81 (NVLYRVTVALALVGIGGMGKLFY) form a helical membrane-spanning segment. The Mitochondrial intermembrane segment spans residues 82–89 (ELSVPKKE).

It belongs to the cytochrome c oxidase VIIa family. In terms of assembly, component of the cytochrome c oxidase (complex IV, CIV), a multisubunit enzyme composed of a catalytic core of 3 subunits and several supernumerary subunits. The complex exists as a monomer or a dimer and forms supercomplexes (SCs) in the inner mitochondrial membrane with ubiquinol-cytochrome c oxidoreductase (cytochrome b-c1 complex, complex III, CIII).

Its subcellular location is the mitochondrion inner membrane. It functions in the pathway energy metabolism; oxidative phosphorylation. Component of the cytochrome c oxidase, the last enzyme in the mitochondrial electron transport chain which drives oxidative phosphorylation. The respiratory chain contains 3 multisubunit complexes succinate dehydrogenase (complex II, CII), ubiquinol-cytochrome c oxidoreductase (cytochrome b-c1 complex, complex III, CIII) and cytochrome c oxidase (complex IV, CIV), that cooperate to transfer electrons derived from NADH and succinate to molecular oxygen, creating an electrochemical gradient over the inner membrane that drives transmembrane transport and the ATP synthase. Cytochrome c oxidase is the component of the respiratory chain that catalyzes the reduction of oxygen to water. Electrons originating from reduced cytochrome c in the intermembrane space (IMS) are transferred via the dinuclear copper A center (CU(A)) of subunit 2 and heme A of subunit 1 to the active site in subunit 1, a binuclear center (BNC) formed by heme A3 and copper B (CU(B)). The BNC reduces molecular oxygen to 2 water molecules using 4 electrons from cytochrome c in the IMS and 4 protons from the mitochondrial matrix. This Drosophila melanogaster (Fruit fly) protein is Cytochrome c oxidase subunit 7A, mitochondrial.